The primary structure comprises 238 residues: Urease subunit alpha (238 aa).

The interval Met-1–Ala-102 is urease gamma. Positions Asn-103–Glu-238 are urease beta.

In the N-terminal section; belongs to the urease gamma subunit family. This sequence in the C-terminal section; belongs to the urease beta subunit family. In terms of assembly, heterohexamer of 3 UreA (alpha) and 3 UreB (beta) subunits.

The protein resides in the cytoplasm. It catalyses the reaction urea + 2 H2O + H(+) = hydrogencarbonate + 2 NH4(+). It functions in the pathway nitrogen metabolism; urea degradation; CO(2) and NH(3) from urea (urease route): step 1/1. The sequence is that of Urease subunit alpha from Helicobacter pylori (strain P12).